The chain runs to 179 residues: Ribosome maturation factor RimP (179 aa).

This sequence belongs to the RimP family.

It localises to the cytoplasm. Functionally, required for maturation of 30S ribosomal subunits. This Chlorobium chlorochromatii (strain CaD3) protein is Ribosome maturation factor RimP.